The chain runs to 248 residues: Adenosylcobinamide-GDP ribazoletransferase (248 aa).

Transmembrane regions (helical) follow at residues 36-56, 59-79, 114-134, 137-157, 170-190, and 199-219; these read FFLP…YLAL, FLPP…ITGG, GTIA…SLVL, YSIA…FLCL, IFIG…VLAL, and ATII…LLCL.

It belongs to the CobS family. It depends on Mg(2+) as a cofactor.

Its subcellular location is the cell membrane. The enzyme catalyses alpha-ribazole + adenosylcob(III)inamide-GDP = adenosylcob(III)alamin + GMP + H(+). The catalysed reaction is alpha-ribazole 5'-phosphate + adenosylcob(III)inamide-GDP = adenosylcob(III)alamin 5'-phosphate + GMP + H(+). It functions in the pathway cofactor biosynthesis; adenosylcobalamin biosynthesis; adenosylcobalamin from cob(II)yrinate a,c-diamide: step 7/7. Functionally, joins adenosylcobinamide-GDP and alpha-ribazole to generate adenosylcobalamin (Ado-cobalamin). Also synthesizes adenosylcobalamin 5'-phosphate from adenosylcobinamide-GDP and alpha-ribazole 5'-phosphate. In Clostridium botulinum (strain Okra / Type B1), this protein is Adenosylcobinamide-GDP ribazoletransferase.